The following is a 376-amino-acid chain: N,N'-diacetylbacillosaminyl-diphospho-undecaprenol alpha-1,3-N-acetylgalactosaminyltransferase (376 aa).

Belongs to the glycosyltransferase group 1 family.

It carries out the reaction N,N'-diacetyl-alpha-D-bacillosaminyl-tri-trans,hepta-cis-undecaprenyl diphosphate + UDP-N-acetyl-alpha-D-galactosamine = N-acetyl-alpha-D-galactosaminyl-(1-&gt;3)-N,N'-diacetyl-alpha-D-bacillosaminyl-tri-trans,hepta-cis-undecaprenyl diphosphate + UDP + H(+). Its pathway is protein modification; protein glycosylation. In terms of biological role, adds the first GalNAc residue on to the isoprenoid-linked bacillosamine (2,4-diacetamido-2,4,6-trideoxyglucose) carrier in the N-linked protein glycosylation pathway. Acts first on the undecaprenylpyrophosphate-linked bacillosamine (Und-PP-Bac) substrate to yield the disaccharide. This is N,N'-diacetylbacillosaminyl-diphospho-undecaprenol alpha-1,3-N-acetylgalactosaminyltransferase (pglA) from Campylobacter jejuni subsp. jejuni serotype O:2 (strain ATCC 700819 / NCTC 11168).